The primary structure comprises 243 residues: Ribosomal RNA small subunit methyltransferase E 2 (243 aa).

Belongs to the RNA methyltransferase RsmE family.

The protein localises to the cytoplasm. It carries out the reaction uridine(1498) in 16S rRNA + S-adenosyl-L-methionine = N(3)-methyluridine(1498) in 16S rRNA + S-adenosyl-L-homocysteine + H(+). In terms of biological role, specifically methylates the N3 position of the uracil ring of uridine 1498 (m3U1498) in 16S rRNA. Acts on the fully assembled 30S ribosomal subunit. In Borreliella burgdorferi (strain ATCC 35210 / DSM 4680 / CIP 102532 / B31) (Borrelia burgdorferi), this protein is Ribosomal RNA small subunit methyltransferase E 2 (rsmE2).